Consider the following 456-residue polypeptide: ATP synthase subunit beta (456 aa).

135–142 (GGAGVGKT) provides a ligand contact to ATP.

This sequence belongs to the ATPase alpha/beta chains family. F-type ATPases have 2 components, CF(1) - the catalytic core - and CF(0) - the membrane proton channel. CF(1) has five subunits: alpha(3), beta(3), gamma(1), delta(1), epsilon(1). CF(0) has four main subunits: a(1), b(1), b'(1) and c(9-12).

The protein resides in the cellular thylakoid membrane. The catalysed reaction is ATP + H2O + 4 H(+)(in) = ADP + phosphate + 5 H(+)(out). Produces ATP from ADP in the presence of a proton gradient across the membrane. The catalytic sites are hosted primarily by the beta subunits. This Acaryochloris marina (strain MBIC 11017) protein is ATP synthase subunit beta (atpD).